We begin with the raw amino-acid sequence, 556 residues long: Formate--tetrahydrofolate ligase (556 aa).

ATP is bound at residue 64–71; sequence TPAGEGKT.

The protein belongs to the formate--tetrahydrofolate ligase family.

The enzyme catalyses (6S)-5,6,7,8-tetrahydrofolate + formate + ATP = (6R)-10-formyltetrahydrofolate + ADP + phosphate. Its pathway is one-carbon metabolism; tetrahydrofolate interconversion. This is Formate--tetrahydrofolate ligase from Actinobacillus pleuropneumoniae serotype 5b (strain L20).